We begin with the raw amino-acid sequence, 149 residues long: Large ribosomal subunit protein uL15 (149 aa).

The disordered stretch occupies residues 1–58 (MKLHNLRPAKGGEVKARKRVGRGYGSGLGHNAGRGRDGQNSRSGGGVRPGFEGGQMPL). Gly residues-rich tracts occupy residues 22–32 (RGYGSGLGHNA) and 43–53 (SGGGVRPGFEG).

It belongs to the universal ribosomal protein uL15 family. In terms of assembly, part of the 50S ribosomal subunit.

Binds to the 23S rRNA. This chain is Large ribosomal subunit protein uL15, found in Finegoldia magna (strain ATCC 29328 / DSM 20472 / WAL 2508) (Peptostreptococcus magnus).